Reading from the N-terminus, the 212-residue chain is Probable nicotinate-nucleotide adenylyltransferase (212 aa).

This sequence belongs to the NadD family.

The catalysed reaction is nicotinate beta-D-ribonucleotide + ATP + H(+) = deamido-NAD(+) + diphosphate. It participates in cofactor biosynthesis; NAD(+) biosynthesis; deamido-NAD(+) from nicotinate D-ribonucleotide: step 1/1. Functionally, catalyzes the reversible adenylation of nicotinate mononucleotide (NaMN) to nicotinic acid adenine dinucleotide (NaAD). The chain is Probable nicotinate-nucleotide adenylyltransferase from Shewanella sp. (strain MR-4).